A 31-amino-acid chain; its full sequence is MEVNILAFIATALLILVPTAFLLIIYVKTAS.

The chain crosses the membrane as a helical span at residues Ile-5–Ile-25.

The protein belongs to the PsbM family. In terms of assembly, PSII is composed of 1 copy each of membrane proteins PsbA, PsbB, PsbC, PsbD, PsbE, PsbF, PsbH, PsbI, PsbJ, PsbK, PsbL, PsbM, PsbT, PsbX, PsbY, PsbZ, Psb30/Ycf12, at least 3 peripheral proteins of the oxygen-evolving complex and a large number of cofactors. It forms dimeric complexes.

It localises to the plastid membrane. In terms of biological role, one of the components of the core complex of photosystem II (PSII). PSII is a light-driven water:plastoquinone oxidoreductase that uses light energy to abstract electrons from H(2)O, generating O(2) and a proton gradient subsequently used for ATP formation. It consists of a core antenna complex that captures photons, and an electron transfer chain that converts photonic excitation into a charge separation. This subunit is found at the monomer-monomer interface. The sequence is that of Photosystem II reaction center protein M from Cuscuta reflexa (Southern Asian dodder).